Here is a 227-residue protein sequence, read N- to C-terminus: 2-C-methyl-D-erythritol 4-phosphate cytidylyltransferase (227 aa).

It belongs to the IspD/TarI cytidylyltransferase family. IspD subfamily.

The catalysed reaction is 2-C-methyl-D-erythritol 4-phosphate + CTP + H(+) = 4-CDP-2-C-methyl-D-erythritol + diphosphate. It participates in isoprenoid biosynthesis; isopentenyl diphosphate biosynthesis via DXP pathway; isopentenyl diphosphate from 1-deoxy-D-xylulose 5-phosphate: step 2/6. Functionally, catalyzes the formation of 4-diphosphocytidyl-2-C-methyl-D-erythritol from CTP and 2-C-methyl-D-erythritol 4-phosphate (MEP). This Bordetella parapertussis (strain 12822 / ATCC BAA-587 / NCTC 13253) protein is 2-C-methyl-D-erythritol 4-phosphate cytidylyltransferase.